The primary structure comprises 667 residues: Mediator of RNA polymerase II transcription subunit 17 (667 aa).

Residues 172 to 197 adopt a coiled-coil conformation; the sequence is KRRALQEAVQVLDMAQKQRQRASSNL.

The protein belongs to the Mediator complex subunit 17 family. As to quaternary structure, component of the Mediator complex.

Its subcellular location is the nucleus. Component of the Mediator complex, a coactivator involved in regulated gene transcription of nearly all RNA polymerase II-dependent genes. Mediator functions as a bridge to convey information from gene-specific regulatory proteins to the basal RNA polymerase II transcription machinery. Mediator is recruited to promoters by direct interactions with regulatory proteins and serves as a scaffold for the assembly of a functional preinitiation complex with RNA polymerase II and the general transcription factors. The chain is Mediator of RNA polymerase II transcription subunit 17 (mdt-17) from Caenorhabditis elegans.